The following is a 330-amino-acid chain: Methionyl-tRNA formyltransferase (330 aa).

Residue 121–124 (SLLP) participates in (6S)-5,6,7,8-tetrahydrofolate binding.

Belongs to the Fmt family.

The enzyme catalyses L-methionyl-tRNA(fMet) + (6R)-10-formyltetrahydrofolate = N-formyl-L-methionyl-tRNA(fMet) + (6S)-5,6,7,8-tetrahydrofolate + H(+). Functionally, attaches a formyl group to the free amino group of methionyl-tRNA(fMet). The formyl group appears to play a dual role in the initiator identity of N-formylmethionyl-tRNA by promoting its recognition by IF2 and preventing the misappropriation of this tRNA by the elongation apparatus. This chain is Methionyl-tRNA formyltransferase, found in Burkholderia cenocepacia (strain HI2424).